A 361-amino-acid chain; its full sequence is Innexin inx1 (361 aa).

At 1-28 (MYKLLGGLKEYLKWQDIVTDNAIFRLHN) the chain is on the cytoplasmic side. A helical membrane pass occupies residues 29 to 49 (LFTTVLLLTCSLIITATQYVG). The Extracellular segment spans residues 50-109 (NPIHCIVNGLPVRPINTYCWITSTFTMPDAFLRQVGSEVAHPGVANDFGDEDAKKYYTYY). The helical transmembrane segment at 110-130 (QWVCFVLFFQAMLCYTPKWIW) threads the bilayer. The Cytoplasmic segment spans residues 131-181 (DSIEGGLLRTLIMGLNRGLCQDDEKCMKKKALIEYLLRHIKRHNMYALKYW). Residues 182–202 (FCETLCLVNIIGQLYLMNHFF) form a helical membrane-spanning segment. At 203 to 267 (DGEFFSYGLR…LPLNIVNEKT (65 aa)) the chain is on the extracellular side. A helical membrane pass occupies residues 268–288 (YIFLWFWYIILAALLSVLVVY). Residues 289–361 (RAVILAVPSV…KIETPSSNNP (73 aa)) lie on the Cytoplasmic side of the membrane.

The protein belongs to the pannexin family. As to expression, expressed in embryonic neural precursors including the dorsal median neuroblast, glial cells, neuropilar glial ring, developing myoblasts cells and in a circumferential band of epithelial cells at the trochanter/coxa boundary stripe in the developing limb.

It is found in the cell membrane. The protein resides in the cell junction. It localises to the gap junction. Functionally, structural components of the gap junctions. The chain is Innexin inx1 (inx1) from Schistocerca americana (American grasshopper).